The chain runs to 1358 residues: DNA-directed RNA polymerase subunit beta (1358 aa).

It belongs to the RNA polymerase beta chain family. The RNAP catalytic core consists of 2 alpha, 1 beta, 1 beta' and 1 omega subunit. When a sigma factor is associated with the core the holoenzyme is formed, which can initiate transcription.

The enzyme catalyses RNA(n) + a ribonucleoside 5'-triphosphate = RNA(n+1) + diphosphate. In terms of biological role, DNA-dependent RNA polymerase catalyzes the transcription of DNA into RNA using the four ribonucleoside triphosphates as substrates. The sequence is that of DNA-directed RNA polymerase subunit beta from Methylococcus capsulatus (strain ATCC 33009 / NCIMB 11132 / Bath).